Reading from the N-terminus, the 424-residue chain is Poly-cysteine and histidine-tailed protein (424 aa).

The first 17 residues, 1-17 (MAFSTIVVLFVAAVGFG), serve as a signal peptide directing secretion. Asparagine 291 is a glycosylation site (N-linked (GlcNAc...) asparagine). Positions 372 to 390 (VGGKKQQKDQPESEKKAEN) are enriched in basic and acidic residues. The segment at 372–424 (VGGKKQQKDQPESEKKAENMPETTGNASHHQHRHHHGDSSSESHEQHHHHHHH) is disordered. The N-linked (GlcNAc...) asparagine glycan is linked to asparagine 397.

Post-translationally, glycosylated. In terms of tissue distribution, expressed in larval tissues like cuticle, hypodermis and muscle (at protein level). Note=Not excreted into striated muscle fibers or nurse cell.

The protein resides in the secreted. In terms of biological role, binds iron and zinc. May bind nickel. The polypeptide is Poly-cysteine and histidine-tailed protein (Trichinella spiralis (Trichina worm)).